Reading from the N-terminus, the 244-residue chain is Mediator of RNA polymerase II transcription subunit 19 (244 aa).

2 disordered regions span residues 1-67 (MENF…PFYL) and 171-244 (PKKK…SSLR). The segment covering 26 to 38 (GKPPPPPPPPPGG) has biased composition (pro residues). Residues 44 to 55 (PPSTATSAPAGA) show a composition bias toward low complexity. Positions 171–182 (PKKKNKHKHKQS) are enriched in basic residues. Ser194 carries the phosphoserine modification. Basic residues predominate over residues 212-224 (KRKKKEKKKKKNR). Ser226 carries the phosphoserine modification. The segment covering 234–244 (SSQASSSSSLR) has biased composition (low complexity).

Belongs to the Mediator complex subunit 19 family. Component of the Mediator complex, which is composed of MED1, MED4, MED6, MED7, MED8, MED9, MED10, MED11, MED12, MED13, MED13L, MED14, MED15, MED16, MED17, MED18, MED19, MED20, MED21, MED22, MED23, MED24, MED25, MED26, MED27, MED29, MED30, MED31, CCNC, CDK8 and CDC2L6/CDK11. The MED12, MED13, CCNC and CDK8 subunits form a distinct module termed the CDK8 module. Mediator containing the CDK8 module is less active than Mediator lacking this module in supporting transcriptional activation. Individual preparations of the Mediator complex lacking one or more distinct subunits have been variously termed ARC, CRSP, DRIP, PC2, SMCC and TRAP.

It is found in the nucleus. Component of the Mediator complex, a coactivator involved in the regulated transcription of nearly all RNA polymerase II-dependent genes. Mediator functions as a bridge to convey information from gene-specific regulatory proteins to the basal RNA polymerase II transcription machinery. Mediator is recruited to promoters by direct interactions with regulatory proteins and serves as a scaffold for the assembly of a functional preinitiation complex with RNA polymerase II and the general transcription factors. The protein is Mediator of RNA polymerase II transcription subunit 19 (Med19) of Mus musculus (Mouse).